The sequence spans 241 residues: MATVSMRDMLKAGVHFGHQTRYWNPKMKPFIFGARNKVHIINLEKTVPMFNEALAELNKISARKGKILFVGTKRAASEAVKEAANSCDQFFVNHRWLGGMLTNWKTVRQSIKRLKDLETQSQDGTFEKLTKKEALMRTRELEKLENSLGGIKDMGGLPDALFVIDADHEHIAIKEANNLGIPVFAIVDTNSDPDGVDFVIPGNDDAIRAVSLYLGAVAATVREGRSQDLASQAEESFVEAE.

This sequence belongs to the universal ribosomal protein uS2 family.

The polypeptide is Small ribosomal subunit protein uS2 (Salmonella agona (strain SL483)).